The primary structure comprises 355 residues: Guanine nucleotide-binding protein subunit alpha-14 (355 aa).

Positions 34 to 355 constitute a G-alpha domain; sequence RELKLLLLGT…QLNLREFNLV (322 aa). Positions 37–50 are G1 motif; it reads KLLLLGTGESGKST. GTP is bound by residues 42–49, 176–182, 201–205, 270–273, and Ala327; these read GTGESGKS, LRVRVPT, DVGGQ, and NKKD. Ser49 contacts Mg(2+). The segment at 174 to 182 is G2 motif; that stretch reads DVLRVRVPT. At Arg179 the chain carries ADP-ribosylarginine; by cholera toxin. Residue Thr182 coordinates Mg(2+). The G3 motif stretch occupies residues 197–206; it reads FRMVDVGGQR. A G4 motif region spans residues 266-273; the sequence is ILFLNKKD. Residues 325-330 are G5 motif; the sequence is TCATDT.

The protein belongs to the G-alpha family. G(q) subfamily. G proteins are composed of 3 units; alpha, beta and gamma. The alpha chain contains the guanine nucleotide binding site.

Guanine nucleotide-binding proteins (G proteins) are involved as modulators or transducers in various transmembrane signaling systems. This Homo sapiens (Human) protein is Guanine nucleotide-binding protein subunit alpha-14 (GNA14).